Reading from the N-terminus, the 523-residue chain is Cytochrome P450 monooxygenase ple5B (523 aa).

A helical membrane pass occupies residues 16–33; sequence IAAAAAGSAVAVYKLLQL. Asn82, Asn103, Asn122, Asn295, Asn379, and Asn423 each carry an N-linked (GlcNAc...) asparagine glycan. Residue Cys446 participates in heme binding.

The protein belongs to the cytochrome P450 family. The cofactor is heme.

The protein resides in the membrane. Its pathway is secondary metabolite biosynthesis; terpenoid biosynthesis. Its function is as follows. Cytochrome P450 monooxygenase; part of the gene cluster that mediates the biosynthesis of pleuromutilin, a tricyclic diterpene showing antibacterial properties. The geranylgeranyl diphosphate (GGPP) synthase ple4 catalyzes the first step in pleuromutilin biosynthesis. GGPP is then substrate of the premutilin synthase (PS) ple3 to yield premutilin. Premutilin synthase is a bifunctional enzyme composed of the fusion of a class II diterpene cyclase (DTC) and a class I diterpene synthase (DTS), with the corresponding domains and active sites containing characteristic aspartate-rich motifs. GGPP is first converted to mutildienyl-diphosphate (MPP) at the class II DTC site. MPP is subsequently further cyclized at the class I DTS site, followed by a 1,5-hydride shift and addition of water prior to terminating deprotonation, to yield premutilin. The cytochrome P450 monooxygenases ple5 and ple6 hydroxylate premutilin at C-11 and C-3, respectively, producing 11-hydroxypremutilin and 3-hydroxypremutilin. The combination of the actions of both ple5 and ple6 leads to the production of 3,11-dihydroxypremutilin. The short chain dehydrogenase ple7 further converts 3,11-dihydroxypremutilin into mutilin. The acetyltransferase ple2 then acetylates mutilin to produce 14-O-acetylmutilin. Finally, the cytochrome P450 monooxygenase ple1 catalyzes hydroxylation on the alpha position of the acetyl side chain of 14-O-acetylmutilin to yield pleuromutilin. The chain is Cytochrome P450 monooxygenase ple5B from Rhodocybe pseudopiperita (Clitopilus pseudopiperitus).